Here is a 145-residue protein sequence, read N- to C-terminus: MDIEQVMQYLPHRYPFLLVDKVTELELGKRITAVKNVTINEPFFNGHFPGAPVMPGVLILEAMAQAAGILSFKTKNYSPEQIGIIYFAGIDGARFKKPVKPGDQLVLKAEIVREVRGIWKYTGRAEVDGALVAEAELMATLRDKP.

The active site involves His-47.

This sequence belongs to the thioester dehydratase family. FabZ subfamily.

It localises to the cytoplasm. It carries out the reaction a (3R)-hydroxyacyl-[ACP] = a (2E)-enoyl-[ACP] + H2O. In terms of biological role, involved in unsaturated fatty acids biosynthesis. Catalyzes the dehydration of short chain beta-hydroxyacyl-ACPs and long chain saturated and unsaturated beta-hydroxyacyl-ACPs. In Thiobacillus denitrificans (strain ATCC 25259 / T1), this protein is 3-hydroxyacyl-[acyl-carrier-protein] dehydratase FabZ.